Reading from the N-terminus, the 454-residue chain is Phosphoglucosamine mutase (454 aa).

Ser-104 (phosphoserine intermediate) is an active-site residue. Ser-104, Asp-247, Asp-249, and Asp-251 together coordinate Mg(2+). Ser-104 bears the Phosphoserine mark.

It belongs to the phosphohexose mutase family. Mg(2+) serves as cofactor. Activated by phosphorylation.

It catalyses the reaction alpha-D-glucosamine 1-phosphate = D-glucosamine 6-phosphate. Catalyzes the conversion of glucosamine-6-phosphate to glucosamine-1-phosphate. The polypeptide is Phosphoglucosamine mutase (Bifidobacterium animalis subsp. lactis (strain AD011)).